The primary structure comprises 374 residues: Alanine racemase (374 aa).

Lys-40 serves as the catalytic Proton acceptor; specific for D-alanine. Residue Lys-40 is modified to N6-(pyridoxal phosphate)lysine. Arg-139 is a binding site for substrate. The Proton acceptor; specific for L-alanine role is filled by Tyr-261. Residue Met-309 coordinates substrate.

The protein belongs to the alanine racemase family. The cofactor is pyridoxal 5'-phosphate.

It catalyses the reaction L-alanine = D-alanine. The protein operates within amino-acid biosynthesis; D-alanine biosynthesis; D-alanine from L-alanine: step 1/1. Its function is as follows. Catalyzes the interconversion of L-alanine and D-alanine. May also act on other amino acids. This chain is Alanine racemase (alr), found in Rhodospirillum rubrum (strain ATCC 11170 / ATH 1.1.1 / DSM 467 / LMG 4362 / NCIMB 8255 / S1).